The primary structure comprises 572 residues: Sulfate adenylyltransferase (572 aa).

An N-terminal region spans residues 1–169 (MANAPHGGVL…IEAVNKLNHY (169 aa)). The segment at 170–393 (DYVALRYTPA…LRESNPPRAT (224 aa)) is catalytic. Gln197 lines the sulfate pocket. Residues 197–200 (QTRN) and 291–294 (GRDH) each bind ATP. Catalysis depends on residues Thr198, Arg199, and Asn200. Arg199 contacts sulfate. Ala295 contributes to the sulfate binding site. Val333 provides a ligand contact to ATP. An allosteric regulation domain; adenylyl-sulfate kinase-like region spans residues 394 to 572 (QGFTIFLTGY…LESQGFLERQ (179 aa)). 3'-phosphoadenylyl sulfate is bound by residues 433–436 (DTVR), Arg450, 476–477 (IA), and Arg514.

The protein in the N-terminal section; belongs to the sulfate adenylyltransferase family. In the C-terminal section; belongs to the APS kinase family. Homohexamer. Dimer of trimers.

Its subcellular location is the cytoplasm. It carries out the reaction sulfate + ATP + H(+) = adenosine 5'-phosphosulfate + diphosphate. Its pathway is sulfur metabolism; hydrogen sulfide biosynthesis; sulfite from sulfate: step 1/3. Allosterically inhibited by 3'-phosphoadenosine 5'-phosphosulfate (PAPS). In terms of biological role, catalyzes the first intracellular reaction of sulfate assimilation, forming adenosine-5'-phosphosulfate (APS) from inorganic sulfate and ATP. Plays an important role in sulfate activation as a component of the biosynthesis pathway of sulfur-containing amino acids. The sequence is that of Sulfate adenylyltransferase from Penicillium chrysogenum (Penicillium notatum).